Consider the following 171-residue polypeptide: UPF0303 protein YPTS_2661 (171 aa).

Belongs to the UPF0303 family.

The chain is UPF0303 protein YPTS_2661 from Yersinia pseudotuberculosis serotype IB (strain PB1/+).